Reading from the N-terminus, the 488-residue chain is Glutamyl-tRNA(Gln) amidotransferase subunit A (488 aa).

Residues Lys-77 and Ser-152 each act as charge relay system in the active site. Ser-176 (acyl-ester intermediate) is an active-site residue.

The protein belongs to the amidase family. GatA subfamily. As to quaternary structure, heterotrimer of A, B and C subunits.

It catalyses the reaction L-glutamyl-tRNA(Gln) + L-glutamine + ATP + H2O = L-glutaminyl-tRNA(Gln) + L-glutamate + ADP + phosphate + H(+). Functionally, allows the formation of correctly charged Gln-tRNA(Gln) through the transamidation of misacylated Glu-tRNA(Gln) in organisms which lack glutaminyl-tRNA synthetase. The reaction takes place in the presence of glutamine and ATP through an activated gamma-phospho-Glu-tRNA(Gln). The protein is Glutamyl-tRNA(Gln) amidotransferase subunit A of Streptococcus pyogenes serotype M4 (strain MGAS10750).